Reading from the N-terminus, the 1898-residue chain is Receptor-type tyrosine-protein phosphatase F (1898 aa).

The signal sequence occupies residues 1–29 (MTPEPAPGRTMVPLVPALVMLGLVAGAHG). Topologically, residues 30–1254 (DSKPVFVKVP…QQQEEPELLW (1225 aa)) are extracellular. 3 consecutive Ig-like C2-type domains span residues 33-123 (PVFV…AKLS), 135-224 (PSID…ANLY), and 232-314 (PRFS…AQVT). An intrachain disulfide couples C54 to C107. 68–77 (KKGKKVSSQR) is a heparin binding site. N-linked (GlcNAc...) asparagine glycosylation is present at N117. A disulfide bond links C156 and C207. 2 N-linked (GlcNAc...) asparagine glycosylation sites follow: N250 and N295. C253 and C298 form a disulfide bridge. 8 Fibronectin type-III domains span residues 321–411 (PPID…TGEQ), 416–510 (PPRR…TQQG), 514–604 (QPAD…TAQS), 609–706 (PPQK…TDED), 711–810 (PPRK…TTGA), 811–905 (VPGR…PEDV), 909–1001 (FPQN…TMPV), and 1005–1089 (FAKN…TAPD). The tract at residues 399-418 (PPSEAVRARTGEQAPSSPPR) is disordered. The segment at 693 to 713 (GPESSPVLVRTDEDVPSGPPR) is disordered. N721 carries an N-linked (GlcNAc...) asparagine glycan. 2 N-linked (GlcNAc...) asparagine glycosylation sites follow: N941 and N957. The chain crosses the membrane as a helical span at residues 1255–1275 (VTGPVLAVILIVLIVIAILLF). Residues 1276–1898 (KRKRTHSPSS…YLGSFDHYAT (623 aa)) are Cytoplasmic-facing. A Phosphoserine modification is found at S1296. Tyrosine-protein phosphatase domains lie at 1343–1598 (FSQE…LLEA) and 1630–1889 (MELE…ALEY). Substrate-binding positions include D1507, 1539–1545 (CSAGVGR), and Q1583. The Phosphocysteine intermediate role is filled by C1539. Residue C1830 is the Phosphocysteine intermediate of the active site.

This sequence belongs to the protein-tyrosine phosphatase family. Receptor class 2A subfamily. Interacts with GRIP1. Interacts with PPFIA1, PPFIA2 and PPFIA3. Interacts with INSR.

It localises to the membrane. The enzyme catalyses O-phospho-L-tyrosyl-[protein] + H2O = L-tyrosyl-[protein] + phosphate. In terms of biological role, possible cell adhesion receptor. It possesses an intrinsic protein tyrosine phosphatase activity (PTPase) and dephosphorylates EPHA2 regulating its activity. The first PTPase domain has enzymatic activity, while the second one seems to affect the substrate specificity of the first one. The sequence is that of Receptor-type tyrosine-protein phosphatase F (PTPRF) from Bos taurus (Bovine).